The chain runs to 197 residues: Fucoxanthin-chlorophyll a-c binding protein D, chloroplastic (197 aa).

Residues 1-31 (MKTAVIASLIAGAAAFAPAKNAARTSVATNM) constitute a chloroplast transit peptide. 3 helical membrane passes run 73–94 (ISMLAVVGYLVQEAGVRLPGTI), 114–133 (PAGGLVQLLFFIGVLESSVM), and 174–196 (GRAAQMGILALMVHEQLGVSLLP).

The protein belongs to the fucoxanthin chlorophyll protein family. The LHC complex of chromophytic algae is composed of fucoxanthin, chlorophyll A and C bound non-covalently by fucoxanthin chlorophyll proteins (FCPs). The ratio of the pigments in LHC; fucoxanthin: chlorophyll C: chlorophyll A; (0.6-1): (0.1-0.3): (1).

The protein localises to the plastid. The protein resides in the chloroplast thylakoid membrane. Its function is as follows. The light-harvesting complex (LHC) functions as a light receptor, it captures and delivers excitation energy to photosystems with which it is closely associated. Energy is transferred from the carotenoid and chlorophyll C (or B) to chlorophyll A and the photosynthetic reaction centers where it is used to synthesize ATP and reducing power. In Phaeodactylum tricornutum (Diatom), this protein is Fucoxanthin-chlorophyll a-c binding protein D, chloroplastic (FCPD).